Consider the following 507-residue polypeptide: Phosphoprotein (507 aa).

The span at 31 to 51 (EVSSLRDQTCNPGQENGTTGM) shows a compositional bias: polar residues. 3 disordered regions span residues 31-86 (EVSS…CGER), 123-172 (IEDA…GYSF), and 242-307 (GIVA…DSEY). A compositionally biased stretch (acidic residues) spans 147-160 (SLDDSTEDSGEDYS). Position 151 is a phosphoserine (Ser-151). Polar residues-rich tracts occupy residues 246 to 271 (GSTSGATQSALKSTGGSSEPSVSAGN) and 289 to 300 (SGTQLPPRTSNE). The tract at residues 304 to 376 (DSEYDDELFS…LSSIMIAIPG (73 aa)) is multimerization. Residues 310–339 (ELFSEIQEIRSAITKLTEDNQAILTKLDTL) adopt a coiled-coil conformation. Positions 459–507 (PSKAVLASLIRSSRVDQSHKHNMLALLKNIKGDDNLNEFYQMVKSITHA) are interaction with the nucleocapsid (N-RNA).

Belongs to the morbillivirus P protein family. In terms of assembly, homotetramer. Interacts (via multimerization domain) with polymerase L; this interaction forms the polymerase L-P complex. Interacts (via N-terminus) with N0 (via Ncore); this interaction allows P to chaperon N0 to avoid N polymerization before encapsidation. Interacts (via C-terminus) with N-RNA template; this interaction positions the polymerase on the template for both transcription and replication. Phosphorylation on serines by host CK2 is necessary for the formation of viral factories.

In terms of biological role, essential cofactor of the RNA polymerase L that plays a central role in the transcription and replication by forming the polymerase complex with RNA polymerase L and recruiting L to the genomic N-RNA template for RNA synthesis. Also plays a central role in the encapsidation of nascent RNA chains by forming the encapsidation complex with the nucleocapsid protein N (N-P complex). Acts as a chaperone for newly synthesized free N protein, so-called N0, allowing encapsidation of nascent RNA chains during replication. The nucleoprotein protein N prevents excessive phosphorylation of P, which leads to down-regulation of viral transcription/ replication. Participates, together with N, in the formation of viral factories (viroplasms), which are large inclusions in the host cytoplasm where replication takes place. This Canine distemper virus (strain Onderstepoort) (CDV) protein is Phosphoprotein (P/V).